Consider the following 704-residue polypeptide: Elongation factor G 1 (704 aa).

In terms of domain architecture, tr-type G spans 8-291; that stretch reads ERYRNIGISA…AVIDYLPSPA (284 aa). Residues 17-24, 88-92, and 142-145 contribute to the GTP site; these read AHIDAGKT, DTPGH, and NKMD.

Belongs to the TRAFAC class translation factor GTPase superfamily. Classic translation factor GTPase family. EF-G/EF-2 subfamily.

It is found in the cytoplasm. Functionally, catalyzes the GTP-dependent ribosomal translocation step during translation elongation. During this step, the ribosome changes from the pre-translocational (PRE) to the post-translocational (POST) state as the newly formed A-site-bound peptidyl-tRNA and P-site-bound deacylated tRNA move to the P and E sites, respectively. Catalyzes the coordinated movement of the two tRNA molecules, the mRNA and conformational changes in the ribosome. The polypeptide is Elongation factor G 1 (Burkholderia pseudomallei (strain 1710b)).